The sequence spans 605 residues: MGVRRSLAALLAALLGCATSLVALTVAASPAHAAPSGNRDVIVHLFQWRWKSIADECRTTLGPHGFGAVQVSPPQEHVVLPAEDYPWWQDYQPVSYKLDQTRRGSRADFIDMVNTCREAGVKIYVDAVINHMTGTGSAGAGPGSAGSSYSKYDYPGIYQSQDFNDCRRDITNWNDKWEVQHCELVGLADLKTSSPYVQDRIAAYLNELIDLGVAGFRIDAAKHIPEGDLQAILSRLKNVHPAWGGGKPYIFQEVIADSTISTGSYTHLGSVTEFQYHRDISHAFANGNIAHLTGLGSGLTPSDKAVVFVVNHDTQRYEPILTHTDRARYDLAQKFMLAHPYGTPKVMSSYTWSGDDKAGPPMHSDGTTRPTDCSADRWLCEHRAVAGMVGFHNAVAGQGIGSAVTDGNGRLAFARGSAGYAAFNATNTAWTRTFTTSLPDGVYCDVANGTFVDGVCDGPSYQVSGGKFTATVPANGAVALHVEAPGSCGPDGCGTPPGGGDDCTTVTARFHATVTTWYGQEVAVVGSIPELGSWQPAQGVRLRTDSGTYPVWSGAVDLPAGVGFEYKYVKLNRTAPWSGSRAATASPPWMTSGGGCSQNFYDSWR.

Residues 1–33 (MGVRRSLAALLAALLGCATSLVALTVAASPAHA) form the signal peptide. Residues asparagine 130 and aspartate 189 each contribute to the Ca(2+) site. Aspartate 219 serves as the catalytic Nucleophile. Residue histidine 223 participates in Ca(2+) binding. Residue glutamate 253 is the Proton donor of the active site. One can recognise a CBM20 domain in the interval 500-605 (GDDCTTVTAR…CSQNFYDSWR (106 aa)).

The protein belongs to the glycosyl hydrolase 13 family. Monomer. Requires Ca(2+) as cofactor.

It catalyses the reaction Endohydrolysis of (1-&gt;4)-alpha-D-glucosidic linkages in polysaccharides containing three or more (1-&gt;4)-alpha-linked D-glucose units.. This is Alpha-amylase (tam) from Thermomonospora curvata.